The primary structure comprises 275 residues: Large ribosomal subunit protein uL2 (275 aa).

A compositionally biased stretch (polar residues) spans 35 to 49 (DSQSSTAGRNNNGRI). Disordered regions lie at residues 35–59 (DSQS…GGHK) and 224–275 (AMNP…RHKR). Positions 50–59 (TTRHKGGGHK) are enriched in basic residues.

The protein belongs to the universal ribosomal protein uL2 family. As to quaternary structure, part of the 50S ribosomal subunit. Forms a bridge to the 30S subunit in the 70S ribosome.

Its function is as follows. One of the primary rRNA binding proteins. Required for association of the 30S and 50S subunits to form the 70S ribosome, for tRNA binding and peptide bond formation. It has been suggested to have peptidyltransferase activity; this is somewhat controversial. Makes several contacts with the 16S rRNA in the 70S ribosome. This is Large ribosomal subunit protein uL2 from Burkholderia cenocepacia (strain HI2424).